Consider the following 299-residue polypeptide: Taste receptor type 2 member 16 (299 aa).

Residues 1-5 (MVPTQ) are Extracellular-facing. A helical transmembrane segment spans residues 6 to 26 (VTIFSIIMYVLESLVIIVQSC). The Cytoplasmic segment spans residues 27–44 (TTVAVLFREWMHFQRLSP). Residues 45–65 (VEIILISLGISHFCLQWTSML) traverse the membrane as a helical segment. The Extracellular portion of the chain corresponds to 66-82 (YNFGTYSRPVLLFWKVS). A helical membrane pass occupies residues 83–103 (VVWEFMNVLTFWLTSLLAVLY). At 104-125 (CVKVSSFSHPVFLWLRLKILKL) the chain is on the cytoplasmic side. A helical transmembrane segment spans residues 126–146 (VLWLLLGALIASCLSIIPSVV). Over 147–183 (KYHIQMELLTLDHLPKNSSLILRLQMFEWYFSNPFKM) the chain is Extracellular. An N-linked (GlcNAc...) asparagine glycan is attached at Asn-163. Residues 184–204 (IGFGVPFLVFLISIILLTVSL) traverse the membrane as a helical segment. Over 205–233 (VQHWGQMKHYSSSSSSLRAQCTVLKSLAT) the chain is Cytoplasmic. Residues 234–254 (FFIFFTSYFLTIVVSFIGTVF) form a helical membrane-spanning segment. The Extracellular segment spans residues 255–258 (DKKS). The helical transmembrane segment at 259 to 279 (WFWVCEAVIYGLVCIHFTSLM) threads the bilayer. Topologically, residues 280–299 (MSNPTLKKALRLQFWSPESS) are cytoplasmic.

It belongs to the G-protein coupled receptor T2R family. Interacts with RTP3 and RTP4. As to expression, expressed in subsets of taste receptor cells of the tongue and palate epithelium and exclusively in gustducin-positive cells. Expressed in the antrum and fundus (part of the stomach), duodenum and in gastric endocrine cells.

Its subcellular location is the cell membrane. Its function is as follows. Gustducin-coupled receptor implicated in the perception of bitter compounds in the oral cavity and the gastrointestinal tract. Signals through PLCB2 and the calcium-regulated cation channel TRPM5. The chain is Taste receptor type 2 member 16 (Tas2r16) from Rattus norvegicus (Rat).